The following is a 464-amino-acid chain: Sulfoacetaldehyde dehydrogenase (acylating) (464 aa).

Cys-241 serves as the catalytic Nucleophile.

Belongs to the aldehyde dehydrogenase family.

The enzyme catalyses sulfoacetaldehyde + NADP(+) + CoA = sulfoacetyl-CoA + NADPH + H(+). Its function is as follows. Involved in the degradation of sulfoacetate. Catalyzes the conversion of sulfoacetyl-CoA and NADPH to sulfoacetaldehyde, CoA and NADP(+). A much lower level of activity (1%) is observed when NADP(+) is replaced with NAD(+). This Bilophila wadsworthia (strain 3_1_6) protein is Sulfoacetaldehyde dehydrogenase (acylating).